A 371-amino-acid polypeptide reads, in one-letter code: tRNA-specific 2-thiouridylase MnmA (371 aa).

ATP contacts are provided by residues 13–20 and Met39; that span reads GMSGGVDS. Positions 99–101 are interaction with target base in tRNA; it reads NPD. The Nucleophile role is filled by Cys104. An intrachain disulfide couples Cys104 to Cys200. ATP is bound at residue Gly128. The interval 150–152 is interaction with tRNA; sequence KDQ. Cys200 serves as the catalytic Cysteine persulfide intermediate. The segment at 308 to 309 is interaction with tRNA; it reads RY.

The protein belongs to the MnmA/TRMU family.

It localises to the cytoplasm. It catalyses the reaction S-sulfanyl-L-cysteinyl-[protein] + uridine(34) in tRNA + AH2 + ATP = 2-thiouridine(34) in tRNA + L-cysteinyl-[protein] + A + AMP + diphosphate + H(+). In terms of biological role, catalyzes the 2-thiolation of uridine at the wobble position (U34) of tRNA, leading to the formation of s(2)U34. This Bacillus cereus (strain ATCC 14579 / DSM 31 / CCUG 7414 / JCM 2152 / NBRC 15305 / NCIMB 9373 / NCTC 2599 / NRRL B-3711) protein is tRNA-specific 2-thiouridylase MnmA.